Reading from the N-terminus, the 908-residue chain is Metabotropic glutamate receptor 8 (908 aa).

Positions 1-33 are cleaved as a signal peptide; sequence MVCEGKRLASCPCFFLLTAKFYWILTMMQRTHS. Over 34-583 the chain is Extracellular; sequence QEYAHSIRVD…IIKLEWHSPW (550 aa). An intrachain disulfide couples cysteine 64 to cysteine 106. N-linked (GlcNAc...) asparagine glycosylation occurs at asparagine 95. L-glutamate contacts are provided by residues serine 156, 177-179, and tyrosine 227; that span reads AST. Cystine bridges form between cysteine 246–cysteine 534, cysteine 369–cysteine 384, cysteine 424–cysteine 431, cysteine 516–cysteine 535, cysteine 520–cysteine 538, cysteine 541–cysteine 553, and cysteine 556–cysteine 569. Asparagine 298 carries N-linked (GlcNAc...) asparagine glycosylation. Position 309 (aspartate 309) interacts with L-glutamate. Lysine 401 contacts L-glutamate. 2 N-linked (GlcNAc...) asparagine glycosylation sites follow: asparagine 452 and asparagine 480. Residue asparagine 565 is glycosylated (N-linked (GlcNAc...) asparagine). A helical transmembrane segment spans residues 584–608; sequence AVVPVFIAILGIIATTFVIVTFVRY. Over 609-620 the chain is Cytoplasmic; sequence NDTPIVRASGRE. The chain crosses the membrane as a helical span at residues 621–641; it reads LSYVLLTGIFLCYSITFLMIA. The Extracellular segment spans residues 642–647; sequence APDTII. A helical transmembrane segment spans residues 648–668; that stretch reads CSFRRIFLGLGMCFSYAALLT. The Cytoplasmic segment spans residues 669–695; the sequence is KTNRIHRIFEQGKKSVTAPKFISPASQ. A helical transmembrane segment spans residues 696–716; it reads LVITFSLISVQLLGVFVWFVV. Residues 717-746 lie on the Extracellular side of the membrane; that stretch reads DPPHTIIDYGEQRTLDPENARGVLKCDISD. A helical membrane pass occupies residues 747 to 768; sequence LSLICSLGYSILLMVTCTVYAI. Over 769–781 the chain is Cytoplasmic; that stretch reads KTRGVPETFNEAK. The chain crosses the membrane as a helical span at residues 782-803; the sequence is PIGFTMYTTCIIWLAFIPIFFG. The Extracellular portion of the chain corresponds to 804–818; sequence TAQSAEKMYIQTTTL. The helical transmembrane segment at 819-843 threads the bilayer; that stretch reads TVSMSLSASVSLGMLYMPKVYIIIF. The Cytoplasmic segment spans residues 844-908; it reads HPEQNVQKRK…TYISYSNHSI (65 aa). Lysine 882 participates in a covalent cross-link: Glycyl lysine isopeptide (Lys-Gly) (interchain with G-Cter in SUMO1).

This sequence belongs to the G-protein coupled receptor 3 family. In terms of assembly, interacts with PICK1. In terms of tissue distribution, prominent expression in olfactory bulb, pontine gray, lateral reticular nucleus of the thalamus, and piriform cortex. Less abundant expression incerebral cortex, hippocampus, cerebellum, and mammillary body.

It is found in the cell membrane. Its function is as follows. G-protein coupled receptor for glutamate. Ligand binding causes a conformation change that triggers signaling via guanine nucleotide-binding proteins (G proteins) and modulates the activity of down-stream effectors. Signaling inhibits adenylate cyclase activity. The sequence is that of Metabotropic glutamate receptor 8 (Grm8) from Rattus norvegicus (Rat).